The following is a 417-amino-acid chain: Gamma-glutamyl phosphate reductase (417 aa).

The protein belongs to the gamma-glutamyl phosphate reductase family.

It is found in the cytoplasm. The catalysed reaction is L-glutamate 5-semialdehyde + phosphate + NADP(+) = L-glutamyl 5-phosphate + NADPH + H(+). Its pathway is amino-acid biosynthesis; L-proline biosynthesis; L-glutamate 5-semialdehyde from L-glutamate: step 2/2. Its function is as follows. Catalyzes the NADPH-dependent reduction of L-glutamate 5-phosphate into L-glutamate 5-semialdehyde and phosphate. The product spontaneously undergoes cyclization to form 1-pyrroline-5-carboxylate. The sequence is that of Gamma-glutamyl phosphate reductase from Enterobacter sp. (strain 638).